We begin with the raw amino-acid sequence, 216 residues long: Thiamine-phosphate synthase (216 aa).

4-amino-2-methyl-5-(diphosphooxymethyl)pyrimidine-binding positions include 39 to 43 (QLRRK) and Asn-71. Positions 72 and 91 each coordinate Mg(2+). Ser-109 contacts 4-amino-2-methyl-5-(diphosphooxymethyl)pyrimidine. Residue 136–138 (SPT) participates in 2-[(2R,5Z)-2-carboxy-4-methylthiazol-5(2H)-ylidene]ethyl phosphate binding. Lys-139 serves as a coordination point for 4-amino-2-methyl-5-(diphosphooxymethyl)pyrimidine. Residues Gly-172 and 192–193 (IT) contribute to the 2-[(2R,5Z)-2-carboxy-4-methylthiazol-5(2H)-ylidene]ethyl phosphate site.

This sequence belongs to the thiamine-phosphate synthase family. Mg(2+) is required as a cofactor.

It catalyses the reaction 2-[(2R,5Z)-2-carboxy-4-methylthiazol-5(2H)-ylidene]ethyl phosphate + 4-amino-2-methyl-5-(diphosphooxymethyl)pyrimidine + 2 H(+) = thiamine phosphate + CO2 + diphosphate. It carries out the reaction 2-(2-carboxy-4-methylthiazol-5-yl)ethyl phosphate + 4-amino-2-methyl-5-(diphosphooxymethyl)pyrimidine + 2 H(+) = thiamine phosphate + CO2 + diphosphate. The enzyme catalyses 4-methyl-5-(2-phosphooxyethyl)-thiazole + 4-amino-2-methyl-5-(diphosphooxymethyl)pyrimidine + H(+) = thiamine phosphate + diphosphate. It participates in cofactor biosynthesis; thiamine diphosphate biosynthesis; thiamine phosphate from 4-amino-2-methyl-5-diphosphomethylpyrimidine and 4-methyl-5-(2-phosphoethyl)-thiazole: step 1/1. Its function is as follows. Condenses 4-methyl-5-(beta-hydroxyethyl)thiazole monophosphate (THZ-P) and 2-methyl-4-amino-5-hydroxymethyl pyrimidine pyrophosphate (HMP-PP) to form thiamine monophosphate (TMP). This Bordetella avium (strain 197N) protein is Thiamine-phosphate synthase.